Here is a 75-residue protein sequence, read N- to C-terminus: uncharacterized protein (75 aa).

This is an uncharacterized protein from Homo sapiens (Human).